A 353-amino-acid chain; its full sequence is Photosystem II protein D1 (353 aa).

T2 carries the post-translational modification N-acetylthreonine. T2 bears the Phosphothreonine mark. 3 helical membrane passes run 29 to 46 (YIGWFGVLMIPTLLTATS), 118 to 133 (HFLLGVACYMGREWEL), and 142 to 156 (WIAVAYSAPVAAATA). A chlorophyll a-binding site is contributed by H118. Y126 serves as a coordination point for pheophytin a. [CaMn4O5] cluster is bound by residues D170 and E189. A helical transmembrane segment spans residues 197–218 (FHMLGVAGVFGGSLFSAMHGSL). Residue H198 participates in chlorophyll a binding. Residues H215 and 264 to 265 (SF) contribute to the a quinone site. H215 contacts Fe cation. H272 is a Fe cation binding site. Residues 274–288 (FLAAWPVVGIWFTAL) form a helical membrane-spanning segment. Residues H332, E333, D342, and A344 each contribute to the [CaMn4O5] cluster site. Residues 345 to 353 (AIDAPSING) constitute a propeptide that is removed on maturation.

Belongs to the reaction center PufL/M/PsbA/D family. As to quaternary structure, PSII is composed of 1 copy each of membrane proteins PsbA, PsbB, PsbC, PsbD, PsbE, PsbF, PsbH, PsbI, PsbJ, PsbK, PsbL, PsbM, PsbT, PsbX, PsbY, PsbZ, Psb30/Ycf12, at least 3 peripheral proteins of the oxygen-evolving complex and a large number of cofactors. It forms dimeric complexes. It depends on The D1/D2 heterodimer binds P680, chlorophylls that are the primary electron donor of PSII, and subsequent electron acceptors. It shares a non-heme iron and each subunit binds pheophytin, quinone, additional chlorophylls, carotenoids and lipids. D1 provides most of the ligands for the Mn4-Ca-O5 cluster of the oxygen-evolving complex (OEC). There is also a Cl(-1) ion associated with D1 and D2, which is required for oxygen evolution. The PSII complex binds additional chlorophylls, carotenoids and specific lipids. as a cofactor. Tyr-161 forms a radical intermediate that is referred to as redox-active TyrZ, YZ or Y-Z. In terms of processing, C-terminally processed by CTPA; processing is essential to allow assembly of the oxygen-evolving complex and thus photosynthetic growth.

It is found in the plastid. The protein localises to the chloroplast thylakoid membrane. It catalyses the reaction 2 a plastoquinone + 4 hnu + 2 H2O = 2 a plastoquinol + O2. Photosystem II (PSII) is a light-driven water:plastoquinone oxidoreductase that uses light energy to abstract electrons from H(2)O, generating O(2) and a proton gradient subsequently used for ATP formation. It consists of a core antenna complex that captures photons, and an electron transfer chain that converts photonic excitation into a charge separation. The D1/D2 (PsbA/PsbD) reaction center heterodimer binds P680, the primary electron donor of PSII as well as several subsequent electron acceptors. This chain is Photosystem II protein D1, found in Glycine max (Soybean).